The sequence spans 1334 residues: SCAR-like protein 2 (1334 aa).

Over residues 197–207 the composition is skewed to basic and acidic residues; that stretch reads KTGNFQREKKS. Disordered stretches follow at residues 197 to 281, 294 to 331, 481 to 516, 568 to 602, 643 to 668, 791 to 832, 931 to 956, 1000 to 1026, 1248 to 1268, and 1280 to 1304; these read KTGN…SSFS, DTKPTVVPHENGHDKLSNNNLHKLSNTPLHTRLNGTSA, PDSSVAEFPDAYQNSSMPPAPESAADFPSLSSADAP, PNQSLPDSKEIPDSKAEDAPIDSPEKLEPGPSSYT, DKPTNEVSATNSSPDDTSSDEDTVES, STSH…KNII, FEKKTENDTNGLPKSSLFSSSHYSEK, FQLLPGSSVPQLGSGSESEDDTFGRSY, SGQQKLNGHEKSKAVGNDTKN, and RSKTFNLRRTNASKTNTSSPTTANS. Positions 241–256 are enriched in polar residues; it reads VQLTSRHFATPSTDGR. Residues 310 to 319 are compositionally biased toward low complexity; the sequence is SNNNLHKLSN. Polar residues predominate over residues 320–330; sequence TPLHTRLNGTS. Basic and acidic residues predominate over residues 574–595; the sequence is DSKEIPDSKAEDAPIDSPEKLE. A compositionally biased stretch (polar residues) spans 791-823; the sequence is STSHSSETNQSTVRTPDTVIGQTEGSTGCSTSF. Over residues 945 to 956 the composition is skewed to low complexity; that stretch reads SSLFSSSHYSEK. Residues 1248–1260 show a composition bias toward basic and acidic residues; it reads SGQQKLNGHEKSK. A WH2 domain is found at 1271–1289; it reads EREELLQQIRSKTFNLRRT. The span at 1289–1304 shows a compositional bias: low complexity; it reads TNASKTNTSSPTTANS.

Belongs to the SCAR/WAVE family.

The protein localises to the cytoplasm. Its subcellular location is the cytoskeleton. In terms of biological role, involved in regulation of actin and microtubule organization. Part of a WAVE complex that activates the Arp2/3 complex. In Oryza sativa subsp. japonica (Rice), this protein is SCAR-like protein 2.